Reading from the N-terminus, the 838-residue chain is Kinesin-like protein KIFC2 (838 aa).

Residues 23 to 32 show a composition bias toward low complexity; the sequence is AAAAEPGDPA. Disordered stretches follow at residues 23 to 48 and 140 to 185; these read AAAA…DLPA and LLQG…GQQP. A compositionally biased stretch (polar residues) spans 156-167; sequence DGSTSQEESPSH. Residues 186 to 351 are a coiled coil; it reads LQLEEDQRAW…SLRQGCGDLR (166 aa). One can recognise a Kinesin motor domain in the interval 409–740; sequence NIRVLCRLRP…ARRSPRGRRI (332 aa). Residue 484–491 participates in ATP binding; that stretch reads GQTGTGKT. The disordered stretch occupies residues 718–792; that stretch reads RSPPTRARPP…SPGPPAPLRR (75 aa).

Belongs to the TRAFAC class myosin-kinesin ATPase superfamily. Kinesin family.

Its subcellular location is the cytoplasm. It localises to the cytoskeleton. In terms of biological role, may play a role in microtubule-dependent retrograde axonal transport. May function as the motor for the transport of multivesicular body (MVB)-like organelles in dendrites. This Homo sapiens (Human) protein is Kinesin-like protein KIFC2 (KIFC2).